Reading from the N-terminus, the 397-residue chain is MLFTNARIVTLRDDQDYGLIEEGAIATDGDQIAWVGPSADVPDAYRSETTHDLGGRLVTPALIDCHTHVVFGGNRATEFELRLNGASYEEVARAGGGIVSTVTATRGASEAALLADALTRVDALIAEGVTLIEVKSGYGLDRDTELKMLRVARQIASARPVDVRTSFLGAHAVPPEFKGNPDAYIDDICIPTLHAAHAEGLVDAVDGFCEGIAFDTAQISRVFDVAGELGLPIKLHAEQLSNIGGTQLAARYGALSADHVEYATDADAQALAKSGTVAVVLPGAFYTLRETQVPPIASFRKHAVRMALATDCNPGSSPLTSPLLAMNMACTLFRMTPLEALLGMTAHAAAALGEQDRGRIMAGARADLCVWNAQHPSELAYRIGFNPLHQRIFKGAI.

The Fe(3+) site is built by H66 and H68. Residues H66 and H68 each contribute to the Zn(2+) site. R75, Y138, and H171 together coordinate 4-imidazolone-5-propanoate. Position 138 (Y138) interacts with N-formimidoyl-L-glutamate. Position 236 (H236) interacts with Fe(3+). H236 contacts Zn(2+). Q239 serves as a coordination point for 4-imidazolone-5-propanoate. D311 lines the Fe(3+) pocket. D311 is a binding site for Zn(2+). N313 and G315 together coordinate N-formimidoyl-L-glutamate. S316 is a 4-imidazolone-5-propanoate binding site.

This sequence belongs to the metallo-dependent hydrolases superfamily. HutI family. The cofactor is Zn(2+). It depends on Fe(3+) as a cofactor.

The protein resides in the cytoplasm. The enzyme catalyses 4-imidazolone-5-propanoate + H2O = N-formimidoyl-L-glutamate. It participates in amino-acid degradation; L-histidine degradation into L-glutamate; N-formimidoyl-L-glutamate from L-histidine: step 3/3. Functionally, catalyzes the hydrolytic cleavage of the carbon-nitrogen bond in imidazolone-5-propanoate to yield N-formimidoyl-L-glutamate. It is the third step in the universal histidine degradation pathway. The sequence is that of Imidazolonepropionase from Roseobacter denitrificans (strain ATCC 33942 / OCh 114) (Erythrobacter sp. (strain OCh 114)).